Consider the following 351-residue polypeptide: Probable cobalt-factor III C(17)-methyltransferase (351 aa).

This sequence belongs to the precorrin methyltransferase family.

It carries out the reaction Co(II)-factor III + S-adenosyl-L-methionine + H(+) = Co(II)-factor IV + S-adenosyl-L-homocysteine. It participates in cofactor biosynthesis; adenosylcobalamin biosynthesis; cob(II)yrinate a,c-diamide from sirohydrochlorin (anaerobic route): step 3/10. Its function is as follows. Methyltransferase that likely catalyzes the ring contraction and methylation of C-17 in cobalt-factor III to form cobalt-factor IV. May also convert cobalt-precorrin-3 to cobalt-precorrin-4. This is Probable cobalt-factor III C(17)-methyltransferase (cbiH) from Methanothermobacter thermautotrophicus (strain ATCC 29096 / DSM 1053 / JCM 10044 / NBRC 100330 / Delta H) (Methanobacterium thermoautotrophicum).